A 617-amino-acid polypeptide reads, in one-letter code: Pyrophosphate--fructose 6-phosphate 1-phosphotransferase subunit alpha 2 (617 aa).

Belongs to the phosphofructokinase type A (PFKA) family. PPi-dependent PFK group II subfamily. Clade 'Long' sub-subfamily. In terms of assembly, tetramer of two alpha (regulatory) and two beta (catalytic) chains. Expressed in roots and specific parts such as the trichomes of leaves, cotyledon veins, as well as in stamen and gynoecium of flowers.

The protein localises to the cytoplasm. It functions in the pathway carbohydrate degradation; glycolysis; D-glyceraldehyde 3-phosphate and glycerone phosphate from D-glucose: step 3/4. Its activity is regulated as follows. Allosterically activated by fructose 2,6-bisphosphate. Functionally, regulatory subunit of pyrophosphate--fructose 6-phosphate 1-phosphotransferase. This chain is Pyrophosphate--fructose 6-phosphate 1-phosphotransferase subunit alpha 2, found in Arabidopsis thaliana (Mouse-ear cress).